The chain runs to 240 residues: Transcriptional activator protein VanR (240 aa).

An HTH luxR-type domain is found at D169 to G234. The H-T-H motif DNA-binding region spans A193–S212.

It belongs to the autoinducer-regulated transcriptional regulatory protein family.

Functionally, probable transcriptional activator. Binds to autoinducer molecule ODHL. The protein is Transcriptional activator protein VanR (vanR) of Vibrio anguillarum (Listonella anguillarum).